Here is a 462-residue protein sequence, read N- to C-terminus: NADH-quinone oxidoreductase subunit N 1 (462 aa).

Helical transmembrane passes span 4–24 (FVVA…VLCL), 32–52 (AGFY…WAVA), 60–80 (IACF…ALLA), 88–108 (FAGD…LLLA), 113–133 (WIML…LIAA), 148–168 (FLPG…IYAA), 178–198 (LAAP…GVGF), 220–240 (VAAF…LHVC), 251–271 (LWPA…LGAV), 279–299 (LLAY…MAVN), 307–327 (LFYL…VGAL), 351–371 (AGVL…AGFV), 374–394 (FLVF…FGII), 416–436 (LIAH…ALGV), and 439–459 (AGLV…AALF).

The protein belongs to the complex I subunit 2 family. NDH-1 is composed of 14 different subunits. Subunits NuoA, H, J, K, L, M, N constitute the membrane sector of the complex.

Its subcellular location is the cell inner membrane. The enzyme catalyses a quinone + NADH + 5 H(+)(in) = a quinol + NAD(+) + 4 H(+)(out). In terms of biological role, NDH-1 shuttles electrons from NADH, via FMN and iron-sulfur (Fe-S) centers, to quinones in the respiratory chain. The immediate electron acceptor for the enzyme in this species is believed to be ubiquinone. Couples the redox reaction to proton translocation (for every two electrons transferred, four hydrogen ions are translocated across the cytoplasmic membrane), and thus conserves the redox energy in a proton gradient. In Solidesulfovibrio magneticus (strain ATCC 700980 / DSM 13731 / RS-1) (Desulfovibrio magneticus), this protein is NADH-quinone oxidoreductase subunit N 1.